Reading from the N-terminus, the 1256-residue chain is Muramidase-released protein (1256 aa).

A signal peptide spans 1–47 (MRRSNKKSFDWYGTKQQFSIRKYHFGAASVLLGVSLVLGAGAQVVKA). 2 Small repeats span residues 663 to 681 (KTTGTVVAGTTTVKYVYEK) and 839 to 861 (KTDGEENGKVIEGTITVTYVYQK). Disordered stretches follow at residues 873–949 (PETD…VDTP), 967–994 (GNPIAPQEEGTKPNKSIPGYEFTGKTVT), and 1028–1049 (KEPVTDTPTSPEGTPYDTTDNK). Residues 953-1006 (VPVKKVVTNHVDEEGNPIAPQEEGTKPNKSIPGYEFTGKTVTDEDGNTTHIYKK) form a Large repeat. A compositionally biased stretch (polar residues) spans 1033–1045 (DTPTSPEGTPYDT). Residues 1064–1084 (RVDGTENGKVVEGETVVTYVY) form a Small repeat. Large repeat units lie at residues 1089-1142 (TPAK…IYKK) and 1143-1195 (TPAK…IYRK). The disordered stretch occupies residues 1102-1137 (EGNPVAPQEEGTKPNKSIPGYEFTGKTVTDEDGNTT). A disordered region spans residues 1196–1229 (LSNKPTTPEKETPAKPQAGKTASGKAQLPNTGEA). Positions 1223-1227 (LPNTG) match the LPXTG sorting signal motif. At Thr1226 the chain carries Pentaglycyl murein peptidoglycan amidated threonine. Residues 1227-1256 (GEASSVAGALGTAMLVATLAFARKRRRNED) constitute a propeptide, removed by sortase.

It is found in the secreted. The protein resides in the cell wall. The protein is Muramidase-released protein (mrp) of Streptococcus suis.